Consider the following 764-residue polypeptide: 5-methyltetrahydropteroyltriglutamate--homocysteine methyltransferase (764 aa).

Residues 17–20 (RELK) and Lys-117 each bind 5-methyltetrahydropteroyltri-L-glutamate. Residues 436–438 (IGS) and Glu-489 contribute to the L-homocysteine site. L-methionine is bound by residues 436 to 438 (IGS) and Glu-489. 5-methyltetrahydropteroyltri-L-glutamate-binding positions include 520-521 (RC) and Trp-566. Asp-604 is a binding site for L-homocysteine. L-methionine is bound at residue Asp-604. Glu-610 lines the 5-methyltetrahydropteroyltri-L-glutamate pocket. The Zn(2+) site is built by His-646, Cys-648, and Glu-670. His-699 serves as the catalytic Proton donor. Cys-731 contributes to the Zn(2+) binding site.

It belongs to the vitamin-B12 independent methionine synthase family. It depends on Zn(2+) as a cofactor.

The enzyme catalyses 5-methyltetrahydropteroyltri-L-glutamate + L-homocysteine = tetrahydropteroyltri-L-glutamate + L-methionine. It participates in amino-acid biosynthesis; L-methionine biosynthesis via de novo pathway; L-methionine from L-homocysteine (MetE route): step 1/1. Its function is as follows. Catalyzes the transfer of a methyl group from 5-methyltetrahydrofolate to homocysteine resulting in methionine formation. The sequence is that of 5-methyltetrahydropteroyltriglutamate--homocysteine methyltransferase from Baumannia cicadellinicola subsp. Homalodisca coagulata.